The following is an 894-amino-acid chain: Protein translocase subunit SecA (894 aa).

Residues Gln87, 105-109 (GEGKT), and Asp512 each bind ATP. The disordered stretch occupies residues 836–870 (EVEQAERERQAHAEQESSHYHAEGEGQDFSDLHIG). 4 residues coordinate Zn(2+): Cys875, Cys877, Cys886, and His887.

It belongs to the SecA family. In terms of assembly, monomer and homodimer. Part of the essential Sec protein translocation apparatus which comprises SecA, SecYEG and auxiliary proteins SecDF-YajC and YidC. Zn(2+) is required as a cofactor.

It localises to the cell inner membrane. Its subcellular location is the cytoplasm. It carries out the reaction ATP + H2O + cellular proteinSide 1 = ADP + phosphate + cellular proteinSide 2.. Functionally, part of the Sec protein translocase complex. Interacts with the SecYEG preprotein conducting channel. Has a central role in coupling the hydrolysis of ATP to the transfer of proteins into and across the cell membrane, serving both as a receptor for the preprotein-SecB complex and as an ATP-driven molecular motor driving the stepwise translocation of polypeptide chains across the membrane. The sequence is that of Protein translocase subunit SecA from Glaesserella parasuis serovar 5 (strain SH0165) (Haemophilus parasuis).